We begin with the raw amino-acid sequence, 143 residues long: Large ribosomal subunit protein uL13 (143 aa).

This sequence belongs to the universal ribosomal protein uL13 family. In terms of assembly, part of the 50S ribosomal subunit.

In terms of biological role, this protein is one of the early assembly proteins of the 50S ribosomal subunit, although it is not seen to bind rRNA by itself. It is important during the early stages of 50S assembly. The protein is Large ribosomal subunit protein uL13 of Natranaerobius thermophilus (strain ATCC BAA-1301 / DSM 18059 / JW/NM-WN-LF).